A 36-amino-acid chain; its full sequence is Tddefensin (36 aa).

3 cysteine pairs are disulfide-bonded: Cys-3–Cys-24, Cys-10–Cys-32, and Cys-14–Cys-34.

Belongs to the invertebrate defensin family. As to expression, expressed by the venom gland.

It localises to the secreted. Antibacterial peptide mostly active against Gram-positive bacteria. In Tityus discrepans (Venezuelan scorpion), this protein is Tddefensin.